The sequence spans 232 residues: Aspartate/glutamate leucyltransferase (232 aa).

This sequence belongs to the R-transferase family. Bpt subfamily.

It localises to the cytoplasm. It carries out the reaction N-terminal L-glutamyl-[protein] + L-leucyl-tRNA(Leu) = N-terminal L-leucyl-L-glutamyl-[protein] + tRNA(Leu) + H(+). The enzyme catalyses N-terminal L-aspartyl-[protein] + L-leucyl-tRNA(Leu) = N-terminal L-leucyl-L-aspartyl-[protein] + tRNA(Leu) + H(+). In terms of biological role, functions in the N-end rule pathway of protein degradation where it conjugates Leu from its aminoacyl-tRNA to the N-termini of proteins containing an N-terminal aspartate or glutamate. In Vibrio vulnificus (strain CMCP6), this protein is Aspartate/glutamate leucyltransferase.